Here is a 303-residue protein sequence, read N- to C-terminus: Elongation factor Ts (303 aa).

An involved in Mg(2+) ion dislocation from EF-Tu region spans residues 79 to 82 (TDFV).

The protein belongs to the EF-Ts family.

The protein localises to the cytoplasm. Its function is as follows. Associates with the EF-Tu.GDP complex and induces the exchange of GDP to GTP. It remains bound to the aminoacyl-tRNA.EF-Tu.GTP complex up to the GTP hydrolysis stage on the ribosome. The polypeptide is Elongation factor Ts (Syntrophotalea carbinolica (strain DSM 2380 / NBRC 103641 / GraBd1) (Pelobacter carbinolicus)).